Consider the following 341-residue polypeptide: tRNA N6-adenosine threonylcarbamoyltransferase (341 aa).

Residues H111 and H115 each coordinate Fe cation. Substrate is bound by residues 134–138 (LVSGG), D167, G180, and N276. Residue D304 coordinates Fe cation.

It belongs to the KAE1 / TsaD family. It depends on Fe(2+) as a cofactor.

It localises to the cytoplasm. The catalysed reaction is L-threonylcarbamoyladenylate + adenosine(37) in tRNA = N(6)-L-threonylcarbamoyladenosine(37) in tRNA + AMP + H(+). Its function is as follows. Required for the formation of a threonylcarbamoyl group on adenosine at position 37 (t(6)A37) in tRNAs that read codons beginning with adenine. Is involved in the transfer of the threonylcarbamoyl moiety of threonylcarbamoyl-AMP (TC-AMP) to the N6 group of A37, together with TsaE and TsaB. TsaD likely plays a direct catalytic role in this reaction. The chain is tRNA N6-adenosine threonylcarbamoyltransferase from Pseudomonas fluorescens (strain SBW25).